A 662-amino-acid polypeptide reads, in one-letter code: Glycine--tRNA ligase beta subunit (662 aa).

Belongs to the class-II aminoacyl-tRNA synthetase family. In terms of assembly, tetramer of two alpha and two beta subunits.

The protein localises to the cytoplasm. The enzyme catalyses tRNA(Gly) + glycine + ATP = glycyl-tRNA(Gly) + AMP + diphosphate. The polypeptide is Glycine--tRNA ligase beta subunit (Rickettsia akari (strain Hartford)).